Reading from the N-terminus, the 550-residue chain is Chaperonin GroEL (550 aa).

ATP contacts are provided by residues 30–33 (TLGP), Lys51, 87–91 (DGTTT), Gly415, and Asp496. The interval 528–550 (EGGDMPAMPPGGMGGMGGMGGMM) is disordered. Positions 538-550 (GGMGGMGGMGGMM) are enriched in gly residues.

Belongs to the chaperonin (HSP60) family. In terms of assembly, forms a cylinder of 14 subunits composed of two heptameric rings stacked back-to-back. Interacts with the co-chaperonin GroES.

It is found in the cytoplasm. It catalyses the reaction ATP + H2O + a folded polypeptide = ADP + phosphate + an unfolded polypeptide.. Together with its co-chaperonin GroES, plays an essential role in assisting protein folding. The GroEL-GroES system forms a nano-cage that allows encapsulation of the non-native substrate proteins and provides a physical environment optimized to promote and accelerate protein folding. This is Chaperonin GroEL from Chlorobium phaeobacteroides (strain BS1).